An 874-amino-acid chain; its full sequence is Leucine--tRNA ligase (874 aa).

The 'HIGH' region motif lies at 43–53 (PYPSGRIHIGH). The short motif at 630-634 (KMSKS) is the 'KMSKS' region element. K633 contributes to the ATP binding site.

Belongs to the class-I aminoacyl-tRNA synthetase family.

The protein resides in the cytoplasm. The enzyme catalyses tRNA(Leu) + L-leucine + ATP = L-leucyl-tRNA(Leu) + AMP + diphosphate. This Bradyrhizobium sp. (strain BTAi1 / ATCC BAA-1182) protein is Leucine--tRNA ligase.